Here is a 2190-residue protein sequence, read N- to C-terminus: Non-reducing polyketide synthase mapC' (2190 aa).

Positions 14 to 268 (VLFGPQCPDI…HHEAHREGIQ (255 aa)) are N-terminal acylcarrier protein transacylase domain (SAT). The 417-residue stretch at 401 to 817 (ASPIAITGMA…GSNAALIVKE (417 aa)) folds into the Ketosynthase family 3 (KS3) domain. Catalysis depends on for beta-ketoacyl synthase activity residues cysteine 566, histidine 701, and histidine 740. The tract at residues 893-1190 (CFGGQNGLTA…NVTSALWAQG (298 aa)) is malonyl-CoA:ACP transacylase (MAT) domain. Serine 979 (for acyl/malonyl transferase activity) is an active-site residue. Residues 1243-1375 (GQEAGLLCQL…GTVCLHQERS (133 aa)) form an N-terminal hotdog fold region. Positions 1243-1552 (GQEAGLLCQL…FTSVSIRSLT (310 aa)) constitute a PKS/mFAS DH domain. Residues 1251 to 1556 (QLSESPDERL…SIRSLTRALA (306 aa)) are product template (PT) domain. Histidine 1277 functions as the Proton acceptor; for dehydratase activity in the catalytic mechanism. The C-terminal hotdog fold stretch occupies residues 1401 to 1552 (ASNGLKGSTV…FTSVSIRSLT (152 aa)). Catalysis depends on aspartate 1458, which acts as the Proton donor; for dehydratase activity. The 75-residue stretch at 1597 to 1671 (ANDLATVQEM…GLVEHIFPGH (75 aa)) folds into the Carrier domain. Residue serine 1631 is modified to O-(pantetheine 4'-phosphoryl)serine. The segment at 1840 to 2187 (ATMSPSKPIK…AEGYEFLRTH (348 aa)) is methyltransferase (CMeT) domain. Active-site for thioesterase activity residues include serine 1969, aspartate 2127, and histidine 2159.

The protein resides in the cytoplasm. It is found in the cytosol. The enzyme catalyses 3 malonyl-CoA + acetyl-CoA + S-adenosyl-L-methionine + H(+) = 5-methylorsellinate + S-adenosyl-L-homocysteine + 3 CO2 + 4 CoA. It functions in the pathway secondary metabolite biosynthesis; terpenoid biosynthesis. Functionally, non-reducing polyketide synthase; part of the gene cluster that mediates the biosynthesis of mycophenolic acid (MPA), the first isolated antibiotic natural product in the world obtained from a culture of Penicillium brevicompactum in 1893. MpaC' catalyzes the synthesis of 5-methylorsellinic acid (5MOA) via the condensation of 1 acetyl-CoA starter unit with 3 malonyl-CoA units and one methylation step. The first step of the pathway is the synthesis of 5-methylorsellinic acid (5MOA) by the cytosolic polyketide synthase mpaC. 5MOA is then converted to the phthalide compound 5,7-dihydroxy-4,6-dimethylphthalide (DHMP) by the endoplasmic reticulum-bound cytochrome P450 monooxygenase mpaDE. MpaDE first catalyzes hydroxylation of 5-MOA to 4,6-dihydroxy-2-(hydroxymethyl)-3-methylbenzoic acid (DHMB). MpaDE then acts as a lactone synthase that catalyzes the ring closure to convert DHMB into DHMP. The next step is the prenylation of DHMP by the Golgi apparatus-associated prenyltransferase mpaA to yield farnesyl-DHMP (FDHMP). The ER-bound oxygenase mpaB then mediates the oxidative cleavage the C19-C20 double bond in FDHMP to yield FDHMP-3C via a mycophenolic aldehyde intermediate. The O-methyltransferase mpaG catalyzes the methylation of FDHMP-3C to yield MFDHMP-3C. After the cytosolic methylation of FDHMP-3C, MFDHMP-3C enters into peroxisomes probably via free diffusion due to its low molecular weight. Upon a peroxisomal CoA ligation reaction, catalyzed by a beta-oxidation component enzyme acyl-CoA ligase ACL891, MFDHMP-3C-CoA would then be restricted to peroxisomes for the following beta-oxidation pathway steps. The peroxisomal beta-oxidation machinery than converts MFDHMP-3C-CoA into MPA_CoA, via a beta-oxidation chain-shortening process. Finally mpaH acts as a peroxisomal acyl-CoA hydrolase with high substrate specificity toward MPA-CoA to release the final product MPA. In Penicillium brevicompactum, this protein is Non-reducing polyketide synthase mapC'.